Consider the following 54-residue polypeptide: QDKCKKVYENYPVSKCQLANQCNYDCKLDKHARSGECFYDEKRNLQCICDYCEY.

Gln-1 carries the pyrrolidone carboxylic acid modification. Disulfide bonds link Cys-4-Cys-52, Cys-16-Cys-37, Cys-22-Cys-47, and Cys-26-Cys-49.

Belongs to the DEFL family. In terms of assembly, monomer.

It is found in the secreted. Taste-modifying protein; sweet-tasting. It is 2000 sweeter than sucrose on a molar basis. In terms of biological role, has a pH-specific antimicrobial activity against bacteria (B.subtilis, E.coli and S.aureus) and the fungus C.albicans. The sequence is that of Defensin-like protein from Pentadiplandra brazzeana.